Here is a 206-residue protein sequence, read N- to C-terminus: Small ribosomal subunit protein uS4 (206 aa).

One can recognise an S4 RNA-binding domain in the interval 96 to 156 (CRLDNVVYRM…EKAKNQLRIV (61 aa)).

This sequence belongs to the universal ribosomal protein uS4 family. Part of the 30S ribosomal subunit. Contacts protein S5. The interaction surface between S4 and S5 is involved in control of translational fidelity.

Its function is as follows. One of the primary rRNA binding proteins, it binds directly to 16S rRNA where it nucleates assembly of the body of the 30S subunit. Functionally, with S5 and S12 plays an important role in translational accuracy. This Pseudomonas fluorescens (strain Pf0-1) protein is Small ribosomal subunit protein uS4.